A 208-amino-acid chain; its full sequence is MTEEARRIVIEHAVEGTRLRESYFNGNADKVVDGARRMAVTLAKGHKLLFCGNGGSAADAQHLAAEFVNRFQMERPPLPAIALTTDTSIITAIGNDYSFDQIFEKQVQALGNEGDMLVGISTSGNSPNVVRAMHAARERGLATMGLTGRGGGEMAGLCDILFDVDHGRTALVQEVHITIGHLLCGLTDHFLFENVLALQPWLKDATNA.

The 163-residue stretch at 38-200 (MAVTLAKGHK…LFENVLALQP (163 aa)) folds into the SIS domain. 53–55 (NGG) is a substrate binding site. Positions 62 and 66 each coordinate Zn(2+). Substrate is bound by residues glutamate 66, 95–96 (ND), 121–123 (STS), serine 126, and glutamine 173. The Zn(2+) site is built by glutamine 173 and histidine 181.

Belongs to the SIS family. GmhA subfamily. In terms of assembly, homotetramer. Zn(2+) is required as a cofactor.

The protein resides in the cytoplasm. The catalysed reaction is 2 D-sedoheptulose 7-phosphate = D-glycero-alpha-D-manno-heptose 7-phosphate + D-glycero-beta-D-manno-heptose 7-phosphate. Its pathway is carbohydrate biosynthesis; D-glycero-D-manno-heptose 7-phosphate biosynthesis; D-glycero-alpha-D-manno-heptose 7-phosphate and D-glycero-beta-D-manno-heptose 7-phosphate from sedoheptulose 7-phosphate: step 1/1. Catalyzes the isomerization of sedoheptulose 7-phosphate in D-glycero-D-manno-heptose 7-phosphate. The polypeptide is Phosphoheptose isomerase (Nitratidesulfovibrio vulgaris (strain ATCC 29579 / DSM 644 / CCUG 34227 / NCIMB 8303 / VKM B-1760 / Hildenborough) (Desulfovibrio vulgaris)).